Here is a 610-residue protein sequence, read N- to C-terminus: V-type proton ATPase catalytic subunit A (610 aa).

Residue 245–252 (GAFGCGKT) coordinates ATP.

Belongs to the ATPase alpha/beta chains family. As to quaternary structure, V-ATPase is a heteromultimeric enzyme composed of a peripheral catalytic V1 complex (main components: subunits A, B, C, D, E, and F) attached to an integral membrane V0 proton pore complex (main component: the proteolipid protein).

It carries out the reaction ATP + H2O + 4 H(+)(in) = ADP + phosphate + 5 H(+)(out). Catalytic subunit of the peripheral V1 complex of vacuolar ATPase. V-ATPase vacuolar ATPase is responsible for acidifying a variety of intracellular compartments in eukaryotic cells. This Trypanosoma congolense protein is V-type proton ATPase catalytic subunit A.